A 424-amino-acid chain; its full sequence is Histidine--tRNA ligase (424 aa).

The protein belongs to the class-II aminoacyl-tRNA synthetase family. As to quaternary structure, homodimer.

Its subcellular location is the cytoplasm. The catalysed reaction is tRNA(His) + L-histidine + ATP = L-histidyl-tRNA(His) + AMP + diphosphate + H(+). In Shigella boydii serotype 18 (strain CDC 3083-94 / BS512), this protein is Histidine--tRNA ligase.